A 605-amino-acid chain; its full sequence is uncharacterized protein (605 aa).

The helical transmembrane segment at 56 to 78 (ILWSSIAAACVILFAAYKTGAYF) threads the bilayer.

It is found in the cell membrane. This is an uncharacterized protein from Bacillus subtilis (strain 168).